The chain runs to 378 residues: Cyclic GMP-AMP synthase-like receptor 1 (378 aa).

Mg(2+)-binding residues include E71, D73, and D187. Residue 71 to 73 (EFD) coordinates ATP. Residues D187 and 233–240 (TSSFYEAE) contribute to the GTP site. ATP contacts are provided by residues 237 to 240 (YEAE), K258, and 271 to 275 (SYHIK).

It belongs to the mab-21 family. Mg(2+) serves as cofactor. Requires Mn(2+) as cofactor.

The enzyme catalyses GTP + ATP = 3',2'-cGAMP + 2 diphosphate. It carries out the reaction GTP + ATP = pppA(2'-5')pG + diphosphate. It catalyses the reaction pppA(2'-5')pG = 3',2'-cGAMP + diphosphate. With respect to regulation, the enzyme activity is specifically activated by double-stranded RNA (dsRNA). Recognizes long dsRNA (&gt;30 bp) with no preference for 5' RNA phosphorylation. Its function is as follows. Nucleotidyltransferase that catalyzes the formation of cyclic GMP-AMP (3',2'-cGAMP) from ATP and GTP and plays a key role in antiviral innate immunity. Synthesizes 3',2'-cGAMP in a two-step reaction through production of the linear intermediate pppA(2'-5')pG. Acts as a key sensor of double-stranded RNA (dsRNA), the presence of dsRNA in the cytoplasm being a danger signal that triggers the immune responses. Directly binds dsRNA, activating the nucleotidyltransferase activity, leading to synthesis of 3',2'-cGAMP, a second messenger that binds to and activates Sting, thereby triggering the antiviral immune response via activation of the NF-kappa-B transcription factor Rel (Relish). 3',2'-cGAMP is protected from poxin cleavage. The protein is Cyclic GMP-AMP synthase-like receptor 1 of Drosophila melanogaster (Fruit fly).